The chain runs to 333 residues: MNQTLIQEILEVVEQAAIASAKLTGLGQKDEADAAAVEAMRLRMGKIEMKGKIVIGEGERDEAPMLYIGEEVGSGSGPGVDFAVDPCEGTNLCANNQRGSMAVLAASDTGGLFNAPDFYMNKLAAPPAAKGKVDIRNSATENLKILSDCLGLSIDELTVVVMDRTRHKDLIKEIRGCGAKVQPISDGDVQAAIACGFAGIGTHCLMGIGAAPEGVISAAAMRALGGHFQGQLVYDPAIAQTSEWADYTKEGNIKRLNEMGITDIDKIYEANELASGENVVFAGSGITDGLLFDGVKFERDCVRTSSLVISTLDSTARFTNTVHIKDGAKSISL.

Residues D33, E57, D85, and E88 each contribute to the Mn(2+) site. Substrate is bound by residues 88–90 (EGT), Y119, 164–166 (RTR), and 186–188 (DGD). E213 provides a ligand contact to Mn(2+).

The protein belongs to the FBPase class 2 family. Homotetramer. Requires Mn(2+) as cofactor.

It carries out the reaction beta-D-fructose 1,6-bisphosphate + H2O = beta-D-fructose 6-phosphate + phosphate. It catalyses the reaction D-sedoheptulose 1,7-bisphosphate + H2O = D-sedoheptulose 7-phosphate + phosphate. The protein operates within carbohydrate biosynthesis; Calvin cycle. Functionally, catalyzes the hydrolysis of fructose 1,6-bisphosphate (Fru 1,6-P2) and sedoheptulose 1,7-bisphosphate (Sed 1,7-P2) to fructose 6-phosphate and sedoheptulose 7-phosphate, respectively. The protein is D-fructose 1,6-bisphosphatase class 2/sedoheptulose 1,7-bisphosphatase of Prochlorococcus marinus (strain AS9601).